The sequence spans 558 residues: Ribonuclease J (558 aa).

Positions 81, 83, 85, 86, 148, and 170 each coordinate Zn(2+). Substrate is bound at residue 371–375 (HVSGH). H397 contacts Zn(2+).

Belongs to the metallo-beta-lactamase superfamily. RNA-metabolizing metallo-beta-lactamase-like family. Bacterial RNase J subfamily. Homodimer, may be a subunit of the RNA degradosome. Zn(2+) serves as cofactor.

The protein localises to the cytoplasm. Functionally, an RNase that has 5'-3' exonuclease and possibly endoonuclease activity. Involved in maturation of rRNA and in some organisms also mRNA maturation and/or decay. This is Ribonuclease J from Mycobacterium tuberculosis (strain CDC 1551 / Oshkosh).